Reading from the N-terminus, the 123-residue chain is Large ribosomal subunit protein bL12 (123 aa).

It belongs to the bacterial ribosomal protein bL12 family. In terms of assembly, homodimer. Part of the ribosomal stalk of the 50S ribosomal subunit. Forms a multimeric L10(L12)X complex, where L10 forms an elongated spine to which 2 to 4 L12 dimers bind in a sequential fashion. Binds GTP-bound translation factors.

Functionally, forms part of the ribosomal stalk which helps the ribosome interact with GTP-bound translation factors. Is thus essential for accurate translation. The protein is Large ribosomal subunit protein bL12 of Mycoplasmopsis synoviae (strain 53) (Mycoplasma synoviae).